The primary structure comprises 382 residues: Anhydro-N-acetylmuramic acid kinase (382 aa).

22-29 (GTSMDGVD) is an ATP binding site.

It belongs to the anhydro-N-acetylmuramic acid kinase family.

It carries out the reaction 1,6-anhydro-N-acetyl-beta-muramate + ATP + H2O = N-acetyl-D-muramate 6-phosphate + ADP + H(+). The protein operates within amino-sugar metabolism; 1,6-anhydro-N-acetylmuramate degradation. Its pathway is cell wall biogenesis; peptidoglycan recycling. In terms of biological role, catalyzes the specific phosphorylation of 1,6-anhydro-N-acetylmuramic acid (anhMurNAc) with the simultaneous cleavage of the 1,6-anhydro ring, generating MurNAc-6-P. Is required for the utilization of anhMurNAc either imported from the medium or derived from its own cell wall murein, and thus plays a role in cell wall recycling. This chain is Anhydro-N-acetylmuramic acid kinase, found in Burkholderia cenocepacia (strain ATCC BAA-245 / DSM 16553 / LMG 16656 / NCTC 13227 / J2315 / CF5610) (Burkholderia cepacia (strain J2315)).